The following is a 949-amino-acid chain: Translation initiation factor IF-2 (949 aa).

Disordered regions lie at residues Phe-54–Pro-183, Leu-217–Leu-288, and Glu-305–Ala-357. Composition is skewed to basic and acidic residues over residues Asp-67–Ile-92 and Ile-101–Ala-164. 2 stretches are compositionally biased toward low complexity: residues Arg-165 to Pro-183 and Leu-217 to Pro-228. Basic and acidic residues-rich tracts occupy residues Pro-235–Leu-288 and Lys-330–Gln-339. Residues Thr-445–Thr-619 form the tr-type G domain. The tract at residues Gly-454–Thr-461 is G1. Residue Gly-454 to Thr-461 coordinates GTP. Positions Gly-479–His-483 are G2. The G3 stretch occupies residues Asp-501 to Gly-504. Residues Asp-501 to His-505 and Asn-555 to Asp-558 contribute to the GTP site. A G4 region spans residues Asn-555 to Asp-558. The segment at Ser-591 to Lys-593 is G5.

It belongs to the TRAFAC class translation factor GTPase superfamily. Classic translation factor GTPase family. IF-2 subfamily.

The protein resides in the cytoplasm. In terms of biological role, one of the essential components for the initiation of protein synthesis. Protects formylmethionyl-tRNA from spontaneous hydrolysis and promotes its binding to the 30S ribosomal subunits. Also involved in the hydrolysis of GTP during the formation of the 70S ribosomal complex. In Magnetococcus marinus (strain ATCC BAA-1437 / JCM 17883 / MC-1), this protein is Translation initiation factor IF-2.